A 304-amino-acid chain; its full sequence is tRNA dimethylallyltransferase (304 aa).

Residue Ala-9–Ser-16 coordinates ATP. Residue Thr-11–Ser-16 participates in substrate binding.

It belongs to the IPP transferase family. In terms of assembly, monomer. Requires Mg(2+) as cofactor.

The catalysed reaction is adenosine(37) in tRNA + dimethylallyl diphosphate = N(6)-dimethylallyladenosine(37) in tRNA + diphosphate. Its function is as follows. Catalyzes the transfer of a dimethylallyl group onto the adenine at position 37 in tRNAs that read codons beginning with uridine, leading to the formation of N6-(dimethylallyl)adenosine (i(6)A). This Deinococcus geothermalis (strain DSM 11300 / CIP 105573 / AG-3a) protein is tRNA dimethylallyltransferase.